The sequence spans 275 residues: Bis(5'-nucleosyl)-tetraphosphatase, symmetrical (275 aa).

The protein belongs to the Ap4A hydrolase family.

It carries out the reaction P(1),P(4)-bis(5'-adenosyl) tetraphosphate + H2O = 2 ADP + 2 H(+). Hydrolyzes diadenosine 5',5'''-P1,P4-tetraphosphate to yield ADP. In Actinobacillus succinogenes (strain ATCC 55618 / DSM 22257 / CCUG 43843 / 130Z), this protein is Bis(5'-nucleosyl)-tetraphosphatase, symmetrical.